The primary structure comprises 574 residues: Adenine deaminase (574 aa).

The protein belongs to the metallo-dependent hydrolases superfamily. Adenine deaminase family. Mn(2+) serves as cofactor.

It carries out the reaction adenine + H2O + H(+) = hypoxanthine + NH4(+). The polypeptide is Adenine deaminase (Thermosipho melanesiensis (strain DSM 12029 / CIP 104789 / BI429)).